A 147-amino-acid polypeptide reads, in one-letter code: Large ribosomal subunit protein uL15 (147 aa).

The segment covering 1-20 has biased composition (basic and acidic residues); it reads MTMHLNDLKPADGARTERTR. The interval 1–64 is disordered; that stretch reads MTMHLNDLKP…GGQTPMQRRL (64 aa). The span at 23-33 shows a compositional bias: gly residues; sequence RGIGSGLGKTC. The span at 34 to 47 shows a compositional bias: basic residues; sequence GRGHKGSFARKGGG.

It belongs to the universal ribosomal protein uL15 family. In terms of assembly, part of the 50S ribosomal subunit.

Binds to the 23S rRNA. In Xanthomonas campestris pv. campestris (strain 8004), this protein is Large ribosomal subunit protein uL15.